A 358-amino-acid chain; its full sequence is Peptide chain release factor 1 (358 aa).

Q233 bears the N5-methylglutamine mark.

This sequence belongs to the prokaryotic/mitochondrial release factor family. Methylated by PrmC. Methylation increases the termination efficiency of RF1.

Its subcellular location is the cytoplasm. Functionally, peptide chain release factor 1 directs the termination of translation in response to the peptide chain termination codons UAG and UAA. This is Peptide chain release factor 1 from Geobacillus sp. (strain WCH70).